Here is a 538-residue protein sequence, read N- to C-terminus: Eukaryotic translation initiation factor 3 subunit L (538 aa).

One can recognise a PCI domain in the interval 305-513 (TFSDILLYIQ…IHIADTKVSH (209 aa)).

It belongs to the eIF-3 subunit L family. As to quaternary structure, component of the eukaryotic translation initiation factor 3 (eIF-3) complex. The eIF-3 complex interacts with pix.

The protein localises to the cytoplasm. Component of the eukaryotic translation initiation factor 3 (eIF-3) complex, which is involved in protein synthesis of a specialized repertoire of mRNAs and, together with other initiation factors, stimulates binding of mRNA and methionyl-tRNAi to the 40S ribosome. The eIF-3 complex specifically targets and initiates translation of a subset of mRNAs involved in cell proliferation. This Drosophila mojavensis (Fruit fly) protein is Eukaryotic translation initiation factor 3 subunit L.